We begin with the raw amino-acid sequence, 504 residues long: Topoisomerase I damage affected protein 11 (504 aa).

Residues 32-62 form a disordered region; it reads RKTGRKIRSASSNGYRLEHHRTSSAGSMHSQ. The stretch at 179-231 forms a coiled coil; the sequence is ALLQSLATKELELLECKQKIEDLKKQTQHEEQNYTRRARELHELKEQVSKHLD. A Phosphothreonine modification is found at threonine 236. Residues serine 244 and serine 286 each carry the phosphoserine modification. Disordered regions lie at residues 252 to 306, 332 to 377, and 400 to 504; these read LESR…SKQS, WDDS…SVSR, and DVIT…MTDF. Polar residues predominate over residues 257 to 287; that stretch reads ENAGNSSLPSSVSKPKNMGHQSTNQSRSVSP. Over residues 290–301 the composition is skewed to basic and acidic residues; the sequence is IQERRQRDDSSD. Composition is skewed to polar residues over residues 332–359 and 368–377; these read WDDS…QQYD and KSPSQGSVSR. The span at 403–421 shows a compositional bias: basic and acidic residues; sequence TDNRCDPVYKSDRQHEQKK. Residues 470–479 show a composition bias toward basic residues; the sequence is TREKKSKRSS. A compositionally biased stretch (polar residues) spans 491–504; it reads DNSSVKNSVEMTDF.

Belongs to the TDA11 family.

The protein localises to the cytoplasm. The chain is Topoisomerase I damage affected protein 11 (TDA11) from Saccharomyces cerevisiae (strain ATCC 204508 / S288c) (Baker's yeast).